The primary structure comprises 41 residues: Large ribosomal subunit protein bL36 (41 aa).

It belongs to the bacterial ribosomal protein bL36 family.

In Bartonella tribocorum (strain CIP 105476 / IBS 506), this protein is Large ribosomal subunit protein bL36.